A 1131-amino-acid polypeptide reads, in one-letter code: Activity-dependent neuroprotector homeobox protein 2 (1131 aa).

The C2H2-type 1 zinc-finger motif lies at Tyr73–His96. A C2H2-type 2; degenerate zinc finger spans residues Ile106–His128. Glycyl lysine isopeptide (Lys-Gly) (interchain with G-Cter in SUMO2) cross-links involve residues Lys118 and Lys146. The C2H2-type 3; degenerate zinc finger occupies Phe155–His178. The C2H2-type 4 zinc-finger motif lies at Tyr215 to His240. The span at Leu274–Ala285 shows a compositional bias: low complexity. The interval Leu274–Ser329 is disordered. Residues Lys694–His716 form a C2H2-type 5; degenerate zinc finger. Residues Val747–His768 form a C2H2-type 6; degenerate zinc finger. C2H2-type zinc fingers lie at residues Leu770–His793 and Ser875–His898. The segment at Phe913–Arg937 adopts a C2H2-type 9; degenerate zinc-finger fold. Glycyl lysine isopeptide (Lys-Gly) (interchain with G-Cter in SUMO2) cross-links involve residues Lys979 and Lys1018. Ser1024 carries the post-translational modification Phosphoserine. A Glycyl lysine isopeptide (Lys-Gly) (interchain with G-Cter in SUMO1); alternate cross-link involves residue Lys1032. Lys1032 participates in a covalent cross-link: Glycyl lysine isopeptide (Lys-Gly) (interchain with G-Cter in SUMO2); alternate. The segment at residues Pro1043–Ile1102 is a DNA-binding region (homeobox).

Belongs to the krueppel C2H2-type zinc-finger protein family. May interact with SMARCA4/BRG1.

Its subcellular location is the nucleus. In terms of biological role, may be involved in transcriptional regulation. May play a role in neuronal function; perhaps involved in protection of brain tissues from oxidative stress. May be involved in erythroid differentiation. In Homo sapiens (Human), this protein is Activity-dependent neuroprotector homeobox protein 2 (ADNP2).